Consider the following 548-residue polypeptide: Synaptic vesicle 2-related protein (548 aa).

Topologically, residues 1–87 are cytoplasmic; sequence MEEDLFQLRQ…GFGKFQWKLS (87 aa). Ser-25 and Ser-31 each carry phosphoserine. A helical transmembrane segment spans residues 88-108; the sequence is VLTGLAWMADAMEMMILSILA. At 109-122 the chain is on the vesicular side; that stretch reads PQLHCEWRLPSWQV. The helical transmembrane segment at 123-143 threads the bilayer; the sequence is ALLTSVVFVGMMSSSTLWGNI. The Cytoplasmic portion of the chain corresponds to 144 to 156; the sequence is SDQYGRKTGLKIS. Residues 157–177 traverse the membrane as a helical segment; the sequence is VLWTLYYGILSAFAPVYSWIL. Residues 178–180 lie on the Vesicular side of the membrane; sequence VLR. The chain crosses the membrane as a helical span at residues 181–201; that stretch reads GLVGFGIGGVPQSVTLYAEFL. Over 202-209 the chain is Cytoplasmic; it reads PMKARAKC. Residues 210–230 form a helical membrane-spanning segment; that stretch reads ILLIEVFWAIGTVFEVVLAVF. Topologically, residues 231 to 238 are vesicular; sequence VMPSLGWR. The helical transmembrane segment at 239 to 259 threads the bilayer; the sequence is WLLILSAVPLLLFAVLCFWLP. The Cytoplasmic segment spans residues 260–316; the sequence is ESARYDVLSGNQEKAIATLKRIATENGAPMPLGKLIISRQEDRGKMRDLFTPHFRWT. The helical transmembrane segment at 317 to 337 threads the bilayer; it reads TLLLWFIWFSNAFSYYGLVLL. Residues 338-373 lie on the Vesicular side of the membrane; that stretch reads TTELFQAGDVCSISSRKKAVEAKCSLACEYLSEEDY. Residues 374–394 form a helical membrane-spanning segment; sequence MDLLWTTLSEFPGVLVTLWII. The Cytoplasmic segment spans residues 395 to 401; that stretch reads DRLGRKK. A helical transmembrane segment spans residues 402-422; that stretch reads TMALCFVVFSFCSLLLFICVG. Topologically, residues 423–425 are vesicular; it reads RNM. A helical transmembrane segment spans residues 426-446; that stretch reads LTLLLFIARAFISGGFQAAYV. Residues 447-457 lie on the Cytoplasmic side of the membrane; the sequence is YTPEVYPTATR. The helical transmembrane segment at 458-478 threads the bilayer; it reads ALGLGTCSGMARVGALITPFI. The Vesicular portion of the chain corresponds to 479–489; that stretch reads AQVMLESSVYL. Residues 490–510 traverse the membrane as a helical segment; it reads TLAVYSGCCLLAALASCFLPI. Residues 511–548 lie on the Cytoplasmic side of the membrane; that stretch reads ETKGRGLQESSHREWGQEMVGRGAHGTGVARSNSGSQE. Residues 528–548 form a disordered region; sequence EMVGRGAHGTGVARSNSGSQE. Ser-542 carries the post-translational modification Phosphoserine.

It belongs to the major facilitator superfamily. As to expression, detected in brain and adrenal medulla.

The protein resides in the cytoplasmic vesicle. Its subcellular location is the secretory vesicle. It is found in the synaptic vesicle membrane. This is Synaptic vesicle 2-related protein (SVOP) from Bos taurus (Bovine).